Here is a 425-residue protein sequence, read N- to C-terminus: Caveolae-associated protein 2 (425 aa).

The disordered stretch occupies residues 1-42; that stretch reads MGEDAAQAEKFQHPGSDMRQEKPSSPSPMPSSTPSPSLNLGN. Residue G2 is modified to N-acetylglycine. An interaction with CAVIN1 region spans residues 2-168; it reads GEDAAQAEKF…IFQEENEIPA (167 aa). Residues 10 to 22 are compositionally biased toward basic and acidic residues; the sequence is KFQHPGSDMRQEK. S27, S35, S37, and S51 each carry phosphoserine. Coiled coils occupy residues 61 to 82 and 125 to 154; these read LLDKLVNMLDAVQENQHKMEQR and TRAVKERMDRQCAQVKRLENNHAQLLRRNH. A leucine-zipper region spans residues 62–100; sequence LDKLVNMLDAVQENQHKMEQRQISLEGSVKGIQNDLTKL. 2 positions are modified to phosphothreonine: T196 and T199. Disordered regions lie at residues 199–234 and 271–425; these read TVDLSSDDDLPHDEEALEDSAEEKVEESRAEKIKRS and IKKS…HQTS. Residues S203, S204, and S218 each carry the phosphoserine modification. The segment covering 203–219 has biased composition (acidic residues); that stretch reads SSDDDLPHDEEALEDSA. Residues 210-268 adopt a coiled-coil conformation; the sequence is HDEEALEDSAEEKVEESRAEKIKRSSLKKVDSLKKAFSRQNIEKKMNKLGTKIVSVERR. Over residues 220–234 the composition is skewed to basic and acidic residues; the sequence is EEKVEESRAEKIKRS. Over residues 274 to 287 the composition is skewed to polar residues; that stretch reads SLTSNHQKISSGKS. S283, S284, S287, S288, and S293 each carry phosphoserine. Residues 303–317 show a composition bias toward basic and acidic residues; sequence REGESHAENETKSED. A phosphoserine mark is found at S332, S341, S366, and S370. Phosphothreonine is present on T375. A compositionally biased stretch (acidic residues) spans 376–385; sequence IVEDEEEESV. Phosphotyrosine is present on Y395. At S403 the chain carries Phosphoserine.

The protein belongs to the CAVIN family. As to quaternary structure, component of the CAVIN complex composed of CAVIN1, CAVIN2, CAVIN3 and CAVIN4. Binds to PRKCA in the presence of phosphatidylserine. Interacts with CAVIN4; this augments the transactivation of NPPA by CAVIN4. Interacts with CAVIN1. Interacts with CAV3. In terms of processing, phosphorylated on Ser residues. As to expression, highly expressed in heart and lung, and expressed at lower levels in brain, kidney, liver, pancreas, placenta, and skeletal muscle.

It localises to the cytoplasm. It is found in the cytosol. The protein resides in the membrane. Its subcellular location is the caveola. Functionally, plays an important role in caveolar biogenesis and morphology. Regulates caveolae morphology by inducing membrane curvature within caveolae. Plays a role in caveola formation in a tissue-specific manner. Required for the formation of caveolae in the lung and fat endothelia but not in the heart endothelia. Negatively regulates the size or stability of CAVIN complexes in the lung endothelial cells. May play a role in targeting PRKCA to caveolae. This Homo sapiens (Human) protein is Caveolae-associated protein 2.